A 426-amino-acid polypeptide reads, in one-letter code: Enolase (426 aa).

(2R)-2-phosphoglycerate is bound at residue glutamine 163. Glutamate 205 serves as the catalytic Proton donor. Positions 242, 283, and 310 each coordinate Mg(2+). Residues lysine 335, arginine 364, serine 365, and lysine 386 each coordinate (2R)-2-phosphoglycerate. The Proton acceptor role is filled by lysine 335.

This sequence belongs to the enolase family. Requires Mg(2+) as cofactor.

Its subcellular location is the cytoplasm. The protein resides in the secreted. It is found in the cell surface. It carries out the reaction (2R)-2-phosphoglycerate = phosphoenolpyruvate + H2O. Its pathway is carbohydrate degradation; glycolysis; pyruvate from D-glyceraldehyde 3-phosphate: step 4/5. Functionally, catalyzes the reversible conversion of 2-phosphoglycerate (2-PG) into phosphoenolpyruvate (PEP). It is essential for the degradation of carbohydrates via glycolysis. In Pseudarthrobacter chlorophenolicus (strain ATCC 700700 / DSM 12829 / CIP 107037 / JCM 12360 / KCTC 9906 / NCIMB 13794 / A6) (Arthrobacter chlorophenolicus), this protein is Enolase.